Consider the following 198-residue polypeptide: Large ribosomal subunit protein bL12m (198 aa).

Residues 1–36 (MLPAAARPLWGPCLGLRAAAFRLARRQVPCVCAVRH) constitute a mitochondrion transit peptide. N6-acetyllysine is present on residues lysine 125, lysine 138, lysine 142, and lysine 144. Lysine 150 is subject to N6-acetyllysine; alternate. Lysine 150 is subject to N6-succinyllysine; alternate. A Glycyl lysine isopeptide (Lys-Gly) (interchain with G-Cter in ubiquitin) cross-link involves residue lysine 150. At lysine 162 the chain carries N6-succinyllysine. Residues lysine 163 and lysine 173 each carry the N6-acetyllysine modification. N6-acetyllysine; alternate is present on lysine 178. At lysine 178 the chain carries N6-succinyllysine; alternate. An N6-acetyllysine modification is found at lysine 185.

It belongs to the bacterial ribosomal protein bL12 family. As to quaternary structure, component of the mitochondrial large ribosomal subunit (mt-LSU). Mature mammalian 55S mitochondrial ribosomes consist of a small (28S) and a large (39S) subunit. The 28S small subunit contains a 12S ribosomal RNA (12S mt-rRNA) and 30 different proteins. The 39S large subunit contains a 16S rRNA (16S mt-rRNA), a copy of mitochondrial valine transfer RNA (mt-tRNA(Val)), which plays an integral structural role, and 52 different proteins. bL12m interacts with NOA1. Two mature forms are produced by differential two-step proteolytic cleavage. Cleaved by the mitochondrial processing protease to produce the long mature form and subsequently by the mitochondrial intermediate protease to produce the short mature form. In terms of processing, in the presence of CUL3, undergoes 'Lys-63'-linked ubiquitination at Lys-150 which results in proteasomal degradation.

The protein localises to the mitochondrion matrix. As a component of the mitochondrial large ribosomal subunit, plays a role in mitochondrial translation. When present in mitochondria as a free protein not associated with the ribosome, associates with mitochondrial RNA polymerase POLRMT to activate transcription. Required for POLRMT stability. This Homo sapiens (Human) protein is Large ribosomal subunit protein bL12m (MRPL12).